Consider the following 413-residue polypeptide: Enolase (413 aa).

Residue glutamine 170 participates in (2R)-2-phosphoglycerate binding. Glutamate 212 serves as the catalytic Proton donor. Residues aspartate 245, glutamate 286, and aspartate 313 each contribute to the Mg(2+) site. 4 residues coordinate (2R)-2-phosphoglycerate: lysine 338, arginine 367, serine 368, and lysine 389. Catalysis depends on lysine 338, which acts as the Proton acceptor.

The protein belongs to the enolase family. Requires Mg(2+) as cofactor.

It localises to the cytoplasm. Its subcellular location is the secreted. It is found in the cell surface. It carries out the reaction (2R)-2-phosphoglycerate = phosphoenolpyruvate + H2O. The protein operates within carbohydrate degradation; glycolysis; pyruvate from D-glyceraldehyde 3-phosphate: step 4/5. Its function is as follows. Catalyzes the reversible conversion of 2-phosphoglycerate (2-PG) into phosphoenolpyruvate (PEP). It is essential for the degradation of carbohydrates via glycolysis. The protein is Enolase of Neorickettsia sennetsu (strain ATCC VR-367 / Miyayama) (Ehrlichia sennetsu).